Here is a 398-residue protein sequence, read N- to C-terminus: uncharacterized protein (398 aa).

The region spanning 21–253 (TNFGPTNLII…WQLTSTSEPE (233 aa)) is the Radical SAM core domain. Cysteine 37, cysteine 41, and cysteine 44 together coordinate [4Fe-4S] cluster.

It belongs to the radical SAM superfamily. Anaerobic sulfatase-maturating enzyme family. [4Fe-4S] cluster serves as cofactor.

This is an uncharacterized protein from Synechocystis sp. (strain ATCC 27184 / PCC 6803 / Kazusa).